Consider the following 119-residue polypeptide: Large ribosomal subunit protein uL18 (119 aa).

Belongs to the universal ribosomal protein uL18 family. Part of the 50S ribosomal subunit; part of the 5S rRNA/L5/L18/L25 subcomplex. Contacts the 5S and 23S rRNAs.

In terms of biological role, this is one of the proteins that bind and probably mediate the attachment of the 5S RNA into the large ribosomal subunit, where it forms part of the central protuberance. The protein is Large ribosomal subunit protein uL18 of Lactobacillus johnsonii (strain CNCM I-12250 / La1 / NCC 533).